The sequence spans 618 residues: Proline--tRNA ligase (618 aa).

The protein belongs to the class-II aminoacyl-tRNA synthetase family. ProS type 1 subfamily. In terms of assembly, homodimer.

Its subcellular location is the cytoplasm. The enzyme catalyses tRNA(Pro) + L-proline + ATP = L-prolyl-tRNA(Pro) + AMP + diphosphate. Its function is as follows. Catalyzes the attachment of proline to tRNA(Pro) in a two-step reaction: proline is first activated by ATP to form Pro-AMP and then transferred to the acceptor end of tRNA(Pro). As ProRS can inadvertently accommodate and process non-cognate amino acids such as alanine and cysteine, to avoid such errors it has two additional distinct editing activities against alanine. One activity is designated as 'pretransfer' editing and involves the tRNA(Pro)-independent hydrolysis of activated Ala-AMP. The other activity is designated 'posttransfer' editing and involves deacylation of mischarged Ala-tRNA(Pro). The misacylated Cys-tRNA(Pro) is not edited by ProRS. This is Proline--tRNA ligase from Streptococcus pyogenes serotype M1.